A 453-amino-acid chain; its full sequence is Protein FAM222A (453 aa).

The protein belongs to the FAM222 family.

The sequence is that of Protein FAM222A (Fam222a) from Mus musculus (Mouse).